Reading from the N-terminus, the 118-residue chain is Large ribosomal subunit protein uL18 (118 aa).

Belongs to the universal ribosomal protein uL18 family. As to quaternary structure, part of the 50S ribosomal subunit; part of the 5S rRNA/L5/L18/L25 subcomplex. Contacts the 5S and 23S rRNAs.

Functionally, this is one of the proteins that bind and probably mediate the attachment of the 5S RNA into the large ribosomal subunit, where it forms part of the central protuberance. This is Large ribosomal subunit protein uL18 from Levilactobacillus brevis (strain ATCC 367 / BCRC 12310 / CIP 105137 / JCM 1170 / LMG 11437 / NCIMB 947 / NCTC 947) (Lactobacillus brevis).